Here is a 92-residue protein sequence, read N- to C-terminus: MKFVIVLACLLAVVFANEEADVVKSDSEVNLLDFNYAYELSNHIRAVQTGALKEHDNWVVSGEYEYVAPNGKTVKVVYTADETGYHPKVVEA.

Residues 1-16 form the signal peptide; that stretch reads MKFVIVLACLLAVVFA. Positions 31-92 constitute a Chitin-binding type R&amp;R domain; it reads LLDFNYAYEL…TGYHPKVVEA (62 aa).

Component of the cuticle of the larva. This Drosophila melanogaster (Fruit fly) protein is Larval cuticle protein 9 (Lcp9).